The sequence spans 452 residues: Protein CLT3, chloroplastic (452 aa).

A chloroplast-targeting transit peptide spans 1–34; sequence MATTSRRFTTGLFASITSVKSHSANRPQSISLIR. 10 helical membrane-spanning segments follow: residues 105–125, 137–157, 175–195, 202–222, 230–250, 258–278, 307–327, 353–373, 389–409, and 412–432; these read AEIV…RVMY, FFLA…ILYF, PFLI…AAAA, TTVL…IFLG, ILGC…GSGA, GVLW…GTVL, FQAI…GIPF, GAPF…IALL, TVSV…LGVA, and LPKG…LYSW.

The protein belongs to the CRT-like transporter family.

The protein resides in the plastid. The protein localises to the chloroplast membrane. Functionally, involved in thiol transport from the plastid to the cytosol. Transports probably both glutathione (GSH) and its precursor, gamma-glutamylcysteine (gamma-EC). Exhibits some functional redundancy with CLT1 in maintaining the root GSH pool. The chain is Protein CLT3, chloroplastic from Arabidopsis thaliana (Mouse-ear cress).